The chain runs to 228 residues: Clathrin light chain B (228 aa).

Met-1 bears the Blocked amino end (Met) mark. Residues 1-17 show a composition bias toward low complexity; that stretch reads MADDFGFFSSSESGAPE. Residues 1–80 are disordered; sequence MADDFGFFSS…VNGDVFQEAN (80 aa). Phosphoserine occurs at positions 11 and 13. The involved in binding clathrin heavy chain stretch occupies residues 92 to 154; sequence ADRLTQEPES…QVEKNKINNR (63 aa). Position 186 is a phosphothreonine (Thr-186). A disulfide bridge links Cys-198 with Cys-208. Lys-203 carries the post-translational modification N6-acetyllysine. Ser-216 is subject to Phosphoserine.

Belongs to the clathrin light chain family. As to quaternary structure, clathrin coats are formed from molecules containing 3 heavy chains and 3 light chains. Interacts (via N-terminus) with HIP1. Interacts with HIP1R.

It localises to the cytoplasmic vesicle membrane. Its subcellular location is the membrane. The protein resides in the coated pit. Functionally, clathrin is the major protein of the polyhedral coat of coated pits and vesicles. The chain is Clathrin light chain B (CLTB) from Bos taurus (Bovine).